An 82-amino-acid chain; its full sequence is Penaeidin-3e (82 aa).

The first 19 residues, 1 to 19 (MRLVVCLVFLAPFALVCHG), serve as a signal peptide directing secretion. Gln20 carries the post-translational modification Pyrrolidone carboxylic acid. Intrachain disulfides connect Cys51–Cys66, Cys55–Cys73, and Cys67–Cys74. At Ser81 the chain carries Serine amide.

Belongs to the penaeidin family.

The protein localises to the cytoplasmic granule. Functionally, antibacterial and antifungal activity. Presents chitin-binding activity. The sequence is that of Penaeidin-3e from Penaeus vannamei (Whiteleg shrimp).